The sequence spans 226 residues: Small ribosomal subunit protein uS5 (226 aa).

Polar residues predominate over residues 1–18 (MAAPQRSRTTGAPSSGGP). The interval 1-45 (MAAPQRSRTTGAPSSGGPSENERGRGGDRRGGDRRGGDRRGGDDR) is disordered. Over residues 20-45 (ENERGRGGDRRGGDRRGGDRRGGDDR) the composition is skewed to basic and acidic residues. One can recognise an S5 DRBM domain in the interval 48–111 (FVERVVTINR…EEAKKNFFRV (64 aa)).

Belongs to the universal ribosomal protein uS5 family. In terms of assembly, part of the 30S ribosomal subunit. Contacts proteins S4 and S8.

Functionally, with S4 and S12 plays an important role in translational accuracy. Located at the back of the 30S subunit body where it stabilizes the conformation of the head with respect to the body. In Beutenbergia cavernae (strain ATCC BAA-8 / DSM 12333 / CCUG 43141 / JCM 11478 / NBRC 16432 / NCIMB 13614 / HKI 0122), this protein is Small ribosomal subunit protein uS5.